Reading from the N-terminus, the 625-residue chain is DNA mismatch repair protein MutL (625 aa).

The disordered stretch occupies residues 404–427 (PPPRNAPQSTGMPSMAGTGLPATS).

It belongs to the DNA mismatch repair MutL/HexB family.

This protein is involved in the repair of mismatches in DNA. It is required for dam-dependent methyl-directed DNA mismatch repair. May act as a 'molecular matchmaker', a protein that promotes the formation of a stable complex between two or more DNA-binding proteins in an ATP-dependent manner without itself being part of a final effector complex. The protein is DNA mismatch repair protein MutL of Xanthomonas oryzae pv. oryzae (strain MAFF 311018).